Reading from the N-terminus, the 324-residue chain is CYFIP-related Rac1 interactor B (324 aa).

Gly-2 carries the N-myristoyl glycine lipid modification. Lys-74 is covalently cross-linked (Glycyl lysine isopeptide (Lys-Gly) (interchain with G-Cter in ubiquitin)).

It belongs to the CYRI family. As to quaternary structure, interacts with RAC1 (GTP-bound form preferentially). Ubiquitinated at Lys-74 upon Salmonella bacterial infection. Expressed in pancreatic ducts (at protein level).

The protein resides in the membrane. It is found in the mitochondrion. In terms of biological role, negatively regulates RAC1 signaling and RAC1-driven cytoskeletal remodeling. Regulates chemotaxis, cell migration and epithelial polarization by controlling the polarity, plasticity, duration and extent of protrusions. Limits Rac1 mediated activation of the Scar/WAVE complex, focuses protrusion signals and regulates pseudopod complexity by inhibiting Scar/WAVE-induced actin polymerization. Protects against Salmonella bacterial infection. Attenuates processes such as macropinocytosis, phagocytosis and cell migration and restrict sopE-mediated bacterial entry. Also restricts infection mediated by Mycobacterium tuberculosis and Listeria monocytogenes. Involved in the regulation of mitochondrial dynamics and oxidative stress. This Mus musculus (Mouse) protein is CYFIP-related Rac1 interactor B (Cyrib).